Here is a 400-residue protein sequence, read N- to C-terminus: Argininosuccinate synthase (400 aa).

Residues 10-18 (AYSGGVDTS) and Ala38 each bind ATP. An L-citrulline-binding site is contributed by Tyr89. Gly119 contacts ATP. Residues Thr121, Asn125, and Asp126 each contribute to the L-aspartate site. Asn125 serves as a coordination point for L-citrulline. L-citrulline is bound by residues Arg129, Ser177, Ser186, Glu262, and Tyr274.

It belongs to the argininosuccinate synthase family. Type 1 subfamily. In terms of assembly, homotetramer.

Its subcellular location is the cytoplasm. It carries out the reaction L-citrulline + L-aspartate + ATP = 2-(N(omega)-L-arginino)succinate + AMP + diphosphate + H(+). The protein operates within amino-acid biosynthesis; L-arginine biosynthesis; L-arginine from L-ornithine and carbamoyl phosphate: step 2/3. This Crocosphaera subtropica (strain ATCC 51142 / BH68) (Cyanothece sp. (strain ATCC 51142)) protein is Argininosuccinate synthase.